Here is a 555-residue protein sequence, read N- to C-terminus: Oxygen-dependent choline dehydrogenase (555 aa).

Residue 4 to 33 coordinates FAD; that stretch reads DYIIIGAGSAGNVLATRLTEDADVSVLLLE. A disordered region spans residues 180-202; that stretch reads QQEGFGPMDRTVTPKGRRASTAR. His473 (proton acceptor) is an active-site residue.

This sequence belongs to the GMC oxidoreductase family. It depends on FAD as a cofactor.

It catalyses the reaction choline + A = betaine aldehyde + AH2. It carries out the reaction betaine aldehyde + NAD(+) + H2O = glycine betaine + NADH + 2 H(+). It functions in the pathway amine and polyamine biosynthesis; betaine biosynthesis via choline pathway; betaine aldehyde from choline (cytochrome c reductase route): step 1/1. Functionally, involved in the biosynthesis of the osmoprotectant glycine betaine. Catalyzes the oxidation of choline to betaine aldehyde and betaine aldehyde to glycine betaine at the same rate. This chain is Oxygen-dependent choline dehydrogenase, found in Serratia proteamaculans (strain 568).